We begin with the raw amino-acid sequence, 400 residues long: Argininosuccinate synthase (400 aa).

An ATP-binding site is contributed by 9–17 (AYSGGLDTS). Tyrosine 87 is a binding site for L-citrulline. ATP is bound at residue glycine 117. The L-aspartate site is built by threonine 119, asparagine 123, and aspartate 124. Asparagine 123 provides a ligand contact to L-citrulline. The L-citrulline site is built by arginine 127, serine 176, serine 185, glutamate 261, and tyrosine 273.

The protein belongs to the argininosuccinate synthase family. Type 1 subfamily. Homotetramer.

The protein resides in the cytoplasm. It catalyses the reaction L-citrulline + L-aspartate + ATP = 2-(N(omega)-L-arginino)succinate + AMP + diphosphate + H(+). It participates in amino-acid biosynthesis; L-arginine biosynthesis; L-arginine from L-ornithine and carbamoyl phosphate: step 2/3. This chain is Argininosuccinate synthase, found in Pelodictyon phaeoclathratiforme (strain DSM 5477 / BU-1).